A 182-amino-acid chain; its full sequence is Dual-action ribosomal maturation protein DarP (182 aa).

The segment at 1–25 (MEENLADNSEREARPSKTKRKKEMH) is disordered.

This sequence belongs to the DarP family.

The protein resides in the cytoplasm. Member of a network of 50S ribosomal subunit biogenesis factors which assembles along the 30S-50S interface, preventing incorrect 23S rRNA structures from forming. Promotes peptidyl transferase center (PTC) maturation. The chain is Dual-action ribosomal maturation protein DarP from Nitrosospira multiformis (strain ATCC 25196 / NCIMB 11849 / C 71).